The sequence spans 182 residues: CDP-diacylglycerol--glycerol-3-phosphate 3-phosphatidyltransferase (182 aa).

The Cytoplasmic segment spans residues 2-12; that stretch reads QFNIPTLLTLF. A helical membrane pass occupies residues 13–37; the sequence is RVALIPFFVLAFYLPFVWAPLLCAL. Residues 38 to 60 lie on the Periplasmic side of the membrane; that stretch reads IFVFAAVTDWFDGFLARRWKQTT. Residues 61 to 81 traverse the membrane as a helical segment; it reads RFGAFLDPVADKVMVAVALVL. Topologically, residues 82–86 are cytoplasmic; that stretch reads VAEYY. Residues 87-107 form a helical membrane-spanning segment; sequence HSWWITLPAATMIAREIIISA. Over 108 to 145 the chain is Periplasmic; the sequence is LREWMAEIGKRSSVAVSWIGKVKTTAQMMALFALLWRP. Residues 146 to 168 traverse the membrane as a helical segment; it reads ERIVEGIGVAALYIAAVLTFWSM. At 169 to 181 the chain is on the cytoplasmic side; that stretch reads FQYLNAARHDLLE.

This sequence belongs to the CDP-alcohol phosphatidyltransferase class-I family.

Its subcellular location is the cell inner membrane. The enzyme catalyses a CDP-1,2-diacyl-sn-glycerol + sn-glycerol 3-phosphate = a 1,2-diacyl-sn-glycero-3-phospho-(1'-sn-glycero-3'-phosphate) + CMP + H(+). It functions in the pathway phospholipid metabolism; phosphatidylglycerol biosynthesis; phosphatidylglycerol from CDP-diacylglycerol: step 1/2. Functionally, catalyzes the conversion of cytidine diphosphate diacylglycerol (CDP-DG) and glycerol 3-phosphate into phosphatidylglycerol. Essential for the synthesis of anionic phospholipids, thereby playing a role in balancing the ratio of zwitterionic and anionic phospholipids, which is thought to be important for normal membrane function. This Pectobacterium atrosepticum (strain SCRI 1043 / ATCC BAA-672) (Erwinia carotovora subsp. atroseptica) protein is CDP-diacylglycerol--glycerol-3-phosphate 3-phosphatidyltransferase.